Consider the following 424-residue polypeptide: Serine--tRNA ligase (424 aa).

230 to 232 (TAE) provides a ligand contact to L-serine. Position 261-263 (261-263 (RSE)) interacts with ATP. L-serine is bound at residue E284. 348–351 (EISS) contributes to the ATP binding site. S384 is an L-serine binding site.

It belongs to the class-II aminoacyl-tRNA synthetase family. Type-1 seryl-tRNA synthetase subfamily. Homodimer. The tRNA molecule binds across the dimer.

The protein localises to the cytoplasm. It catalyses the reaction tRNA(Ser) + L-serine + ATP = L-seryl-tRNA(Ser) + AMP + diphosphate + H(+). The catalysed reaction is tRNA(Sec) + L-serine + ATP = L-seryl-tRNA(Sec) + AMP + diphosphate + H(+). It participates in aminoacyl-tRNA biosynthesis; selenocysteinyl-tRNA(Sec) biosynthesis; L-seryl-tRNA(Sec) from L-serine and tRNA(Sec): step 1/1. In terms of biological role, catalyzes the attachment of serine to tRNA(Ser). Is also able to aminoacylate tRNA(Sec) with serine, to form the misacylated tRNA L-seryl-tRNA(Sec), which will be further converted into selenocysteinyl-tRNA(Sec). This is Serine--tRNA ligase from Streptococcus pneumoniae serotype 4 (strain ATCC BAA-334 / TIGR4).